A 270-amino-acid polypeptide reads, in one-letter code: 2-epi-5-epi-valiolone 7-phosphate 2-epimerase (270 aa).

Catalysis depends on proton donor/acceptor residues glutamate 143 and glutamate 236.

The protein belongs to the hyi family.

The catalysed reaction is 2-epi-5-epi-valiolone 7-phosphate = 5-epi-valiolone 7-phosphate. Functionally, involved in the biosynthesis of the alpha-glucosidase inhibitor acarbose. Catalyzes the 2-epimerisation of 2-epi-5-epivaliolone 7-phosphate to yield 5-epi-valiolone 7-phosphate. The chain is 2-epi-5-epi-valiolone 7-phosphate 2-epimerase (acbO) from Actinoplanes sp. (strain ATCC 31044 / CBS 674.73 / SE50/110).